A 200-amino-acid chain; its full sequence is NAD(P)H dehydrogenase (quinone) (200 aa).

The Flavodoxin-like domain maps to 4–191 (ILVLYHSLWG…TIARFQGRHV (188 aa)). Residues 10–15 (SLWGHV) and 79–81 (TRF) contribute to the FMN site. Tryptophan 12 is an NAD(+) binding site. Tryptophan 99 lines the substrate pocket. FMN-binding positions include 114-120 (STATQHG) and histidine 135.

It belongs to the WrbA family. It depends on FMN as a cofactor.

The enzyme catalyses a quinone + NADH + H(+) = a quinol + NAD(+). It carries out the reaction a quinone + NADPH + H(+) = a quinol + NADP(+). The sequence is that of NAD(P)H dehydrogenase (quinone) from Acidithiobacillus ferrooxidans (strain ATCC 53993 / BNL-5-31) (Leptospirillum ferrooxidans (ATCC 53993)).